Reading from the N-terminus, the 731-residue chain is 1,4-alpha-glucan branching enzyme GlgB (731 aa).

Asp-411 serves as the catalytic Nucleophile. Residue Glu-464 is the Proton donor of the active site.

It belongs to the glycosyl hydrolase 13 family. GlgB subfamily. Monomer.

The enzyme catalyses Transfers a segment of a (1-&gt;4)-alpha-D-glucan chain to a primary hydroxy group in a similar glucan chain.. Its pathway is glycan biosynthesis; glycogen biosynthesis. Catalyzes the formation of the alpha-1,6-glucosidic linkages in glycogen by scission of a 1,4-alpha-linked oligosaccharide from growing alpha-1,4-glucan chains and the subsequent attachment of the oligosaccharide to the alpha-1,6 position. The chain is 1,4-alpha-glucan branching enzyme GlgB from Mycolicibacterium paratuberculosis (strain ATCC BAA-968 / K-10) (Mycobacterium paratuberculosis).